The chain runs to 485 residues: uncharacterized protein (485 aa).

3 helical membrane passes run Leu-284 to Phe-304, Leu-328 to Lys-348, and Leu-353 to Leu-373.

It belongs to the CBF/MAK21 family.

It is found in the membrane. This is an uncharacterized protein from Schizosaccharomyces pombe (strain 972 / ATCC 24843) (Fission yeast).